The chain runs to 367 residues: Glutamate 5-kinase (367 aa).

K10 serves as a coordination point for ATP. Positions 50, 137, and 149 each coordinate substrate. ATP-binding positions include 169-170 (TD) and 211-217 (TGGMSTK). The PUA domain occupies 275–353 (AGEITVDEGA…QEIDAILGYE (79 aa)).

This sequence belongs to the glutamate 5-kinase family.

It is found in the cytoplasm. It carries out the reaction L-glutamate + ATP = L-glutamyl 5-phosphate + ADP. Its pathway is amino-acid biosynthesis; L-proline biosynthesis; L-glutamate 5-semialdehyde from L-glutamate: step 1/2. In terms of biological role, catalyzes the transfer of a phosphate group to glutamate to form L-glutamate 5-phosphate. The sequence is that of Glutamate 5-kinase from Escherichia coli O81 (strain ED1a).